A 147-amino-acid polypeptide reads, in one-letter code: Hemoglobin subunit beta-H1 (147 aa).

The region spanning 3–147 (HFTAEEKAAI…VANALSHKYH (145 aa)) is the Globin domain. Heme b contacts are provided by His-64 and His-93.

It belongs to the globin family. As to quaternary structure, heterotetramer of two alpha chains and two beta chains. As to expression, red blood cells.

This is an embryonic beta-type chain. The chain is Hemoglobin subunit beta-H1 (Hbb-bh1) from Mus musculus (Mouse).